A 562-amino-acid polypeptide reads, in one-letter code: Membrane protein insertase YidC (562 aa).

A helical membrane pass occupies residues 4 to 24 (QRIFLFLALSILGLLLWTSWE). The segment at 33-71 (TEEVVEAEDDVPAPAETPDEAPDPADGETPARDRAEVED) is disordered. The span at 35-58 (EVVEAEDDVPAPAETPDEAPDPAD) shows a compositional bias: acidic residues. The span at 61 to 71 (TPARDRAEVED) shows a compositional bias: basic and acidic residues. 4 helical membrane-spanning segments follow: residues 330-350 (MTLSVDYGFLTVLAKPLFWLL), 356-376 (IVGNWGVAIILVTLLIKLAFY), 426-446 (LGGCLPILVQIPVFIALYWVL), and 499-519 (IMMALPIVFTGFFMLFPAGLV).

Belongs to the OXA1/ALB3/YidC family. Type 1 subfamily. As to quaternary structure, interacts with the Sec translocase complex via SecD. Specifically interacts with transmembrane segments of nascent integral membrane proteins during membrane integration.

The protein localises to the cell inner membrane. Required for the insertion and/or proper folding and/or complex formation of integral membrane proteins into the membrane. Involved in integration of membrane proteins that insert both dependently and independently of the Sec translocase complex, as well as at least some lipoproteins. Aids folding of multispanning membrane proteins. This Alkalilimnicola ehrlichii (strain ATCC BAA-1101 / DSM 17681 / MLHE-1) protein is Membrane protein insertase YidC.